Consider the following 261-residue polypeptide: Adenosylcobinamide-GDP ribazoletransferase (261 aa).

The next 5 helical transmembrane spans lie at 31–51 (YAIC…FLTF), 59–79 (LGDI…SGGI), 125–145 (FGMV…FFVV), 183–203 (VIYL…LTVV), and 240–260 (LMAG…TGHW).

This sequence belongs to the CobS family. Mg(2+) is required as a cofactor.

It localises to the cell membrane. It catalyses the reaction alpha-ribazole + adenosylcob(III)inamide-GDP = adenosylcob(III)alamin + GMP + H(+). The catalysed reaction is alpha-ribazole 5'-phosphate + adenosylcob(III)inamide-GDP = adenosylcob(III)alamin 5'-phosphate + GMP + H(+). It functions in the pathway cofactor biosynthesis; adenosylcobalamin biosynthesis; adenosylcobalamin from cob(II)yrinate a,c-diamide: step 7/7. In terms of biological role, joins adenosylcobinamide-GDP and alpha-ribazole to generate adenosylcobalamin (Ado-cobalamin). Also synthesizes adenosylcobalamin 5'-phosphate from adenosylcobinamide-GDP and alpha-ribazole 5'-phosphate. The protein is Adenosylcobinamide-GDP ribazoletransferase of Lachnoclostridium phytofermentans (strain ATCC 700394 / DSM 18823 / ISDg) (Clostridium phytofermentans).